A 159-amino-acid chain; its full sequence is Ribosomal RNA large subunit methyltransferase H (159 aa).

S-adenosyl-L-methionine contacts are provided by residues Leu76, Gly108, and Phe127 to Leu132.

This sequence belongs to the RNA methyltransferase RlmH family. In terms of assembly, homodimer.

The protein resides in the cytoplasm. It catalyses the reaction pseudouridine(1915) in 23S rRNA + S-adenosyl-L-methionine = N(3)-methylpseudouridine(1915) in 23S rRNA + S-adenosyl-L-homocysteine + H(+). In terms of biological role, specifically methylates the pseudouridine at position 1915 (m3Psi1915) in 23S rRNA. The protein is Ribosomal RNA large subunit methyltransferase H of Streptococcus pyogenes serotype M12 (strain MGAS2096).